A 291-amino-acid polypeptide reads, in one-letter code: tRNA dimethylallyltransferase (291 aa).

Residue 5 to 12 coordinates ATP; it reads GPTAGGKS. 7–12 lines the substrate pocket; it reads TAGGKS. The tract at residues 30-33 is interaction with substrate tRNA; the sequence is DSMQ.

Belongs to the IPP transferase family. In terms of assembly, monomer. Requires Mg(2+) as cofactor.

It carries out the reaction adenosine(37) in tRNA + dimethylallyl diphosphate = N(6)-dimethylallyladenosine(37) in tRNA + diphosphate. Its function is as follows. Catalyzes the transfer of a dimethylallyl group onto the adenine at position 37 in tRNAs that read codons beginning with uridine, leading to the formation of N6-(dimethylallyl)adenosine (i(6)A). This is tRNA dimethylallyltransferase from Frankia casuarinae (strain DSM 45818 / CECT 9043 / HFP020203 / CcI3).